The primary structure comprises 496 residues: MLPKRRRVRAGSPHSAVASSTPPSVVRFPDVAIYLAEPRMGRSRRAFLTRLARSKGFRVLDAYSSKVTHVVMEGTSAKEAICWQKNMDALPTGCPQPALLDISWFTESMAAGQPVPEEGRHHLEVAEPRKEPPVSASMPAYACQRPSPLTHHNTLLSEALETLAEAAGFEANEGRLLSFSRAASVLKSLPCPVASLSQLHGLPYFGEHSTRVIQELLEHGTCEEVKQVRCSERYQTMKLFTQVFGVGVKTANRWYQEGLRTLDELREQPQRLTQQQKAGLQYYQDLSTPVRRADAEALQQLIEAAVRQTLPGATVTLTGGFRRGKLQGHDVDFLITHPEEGQEVGLLPKVMSCLQSQGLVLYHQYHRSHLADSAHNLRQRSSTMDAFERSFCILGLPQPQQAALAGALPPCPTWKAVRVDLVVTPSSQFPFALLGWTGSQFFERELRRFSRQEKGLWLNSHGLFDPEQKRVFHATSEEDVFRLLGLKYLPPEQRNA.

Residues 1 to 22 form a disordered region; it reads MLPKRRRVRAGSPHSAVASSTP. A Phosphoserine modification is found at S12. Over residues 12–22 the composition is skewed to low complexity; the sequence is SPHSAVASSTP. Residues 23–122 enclose the BRCT domain; it reads PSVVRFPDVA…QPVPEEGRHH (100 aa). 2 residues coordinate Na(+): T241 and V243. The interval 323 to 332 is involved in ssDNA binding; sequence RGKLQGHDVD. Mg(2+) is bound by residues D330, D332, and D420.

Belongs to the DNA polymerase type-X family. Requires Mg(2+) as cofactor.

Its subcellular location is the nucleus. It carries out the reaction DNA(n) + a 2'-deoxyribonucleoside 5'-triphosphate = DNA(n+1) + diphosphate. Functionally, gap-filling polymerase involved in repair of DNA double-strand breaks by non-homologous end joining (NHEJ). Participates in immunoglobulin (Ig) light chain gene rearrangement in V(D)J recombination. The chain is DNA-directed DNA/RNA polymerase mu (Polm) from Mus musculus (Mouse).